The following is a 446-amino-acid chain: Tol-Pal system protein TolB (446 aa).

Residues 1 to 36 (MMDVQTVRRGNAVQSLMSKLILPLVMAVAFALPARA) form the signal peptide. The disordered stretch occupies residues 424-446 (GYNERPSPTPTFASDPAWSPRIQ).

This sequence belongs to the TolB family. The Tol-Pal system is composed of five core proteins: the inner membrane proteins TolA, TolQ and TolR, the periplasmic protein TolB and the outer membrane protein Pal. They form a network linking the inner and outer membranes and the peptidoglycan layer.

It is found in the periplasm. Its function is as follows. Part of the Tol-Pal system, which plays a role in outer membrane invagination during cell division and is important for maintaining outer membrane integrity. The protein is Tol-Pal system protein TolB of Parvibaculum lavamentivorans (strain DS-1 / DSM 13023 / NCIMB 13966).